Reading from the N-terminus, the 126-residue chain is SOSS complex subunit C homolog (126 aa).

Positions 106–126 are disordered; sequence LEPLPSPATTPTAPPSHSISK. Pro residues predominate over residues 107–119; it reads EPLPSPATTPTAP.

Belongs to the SOSS-C family.

The protein is SOSS complex subunit C homolog of Drosophila sechellia (Fruit fly).